Here is a 398-residue protein sequence, read N- to C-terminus: 1-deoxy-D-xylulose 5-phosphate reductoisomerase (398 aa).

The NADPH site is built by Thr-11, Gly-12, Ser-13, Ile-14, and Asn-125. Residue Lys-126 participates in 1-deoxy-D-xylulose 5-phosphate binding. Glu-127 lines the NADPH pocket. Position 151 (Asp-151) interacts with Mn(2+). Residues Ser-152, Glu-153, Ser-186, and His-209 each contribute to the 1-deoxy-D-xylulose 5-phosphate site. A Mn(2+)-binding site is contributed by Glu-153. NADPH is bound at residue Gly-215. 4 residues coordinate 1-deoxy-D-xylulose 5-phosphate: Ser-222, Asn-227, Lys-228, and Glu-231. Glu-231 contacts Mn(2+).

It belongs to the DXR family. Mg(2+) is required as a cofactor. The cofactor is Mn(2+).

The catalysed reaction is 2-C-methyl-D-erythritol 4-phosphate + NADP(+) = 1-deoxy-D-xylulose 5-phosphate + NADPH + H(+). It functions in the pathway isoprenoid biosynthesis; isopentenyl diphosphate biosynthesis via DXP pathway; isopentenyl diphosphate from 1-deoxy-D-xylulose 5-phosphate: step 1/6. Functionally, catalyzes the NADPH-dependent rearrangement and reduction of 1-deoxy-D-xylulose-5-phosphate (DXP) to 2-C-methyl-D-erythritol 4-phosphate (MEP). The chain is 1-deoxy-D-xylulose 5-phosphate reductoisomerase from Acinetobacter baumannii (strain ATCC 17978 / DSM 105126 / CIP 53.77 / LMG 1025 / NCDC KC755 / 5377).